The chain runs to 559 residues: Nuclear speckle splicing regulatory protein 1 (559 aa).

The interval Val22–Lys57 is disordered. Ser27 and Ser33 each carry phosphoserine. The span at Asp32 to Ser41 shows a compositional bias: acidic residues. Residues Ile105–Arg179 adopt a coiled-coil conformation. The necessary for alternative splicing activity stretch occupies residues Asn107–Ala171. Positions Glu195 to Thr534 are disordered. Positions Arg204–Ser219 are enriched in basic and acidic residues. Lys211 is covalently cross-linked (Glycyl lysine isopeptide (Lys-Gly) (interchain with G-Cter in SUMO2)). Phosphoserine is present on residues Ser249, Ser255, and Ser256. Residues Phe251–Thr274 show a composition bias toward basic and acidic residues. Thr276 carries the phosphothreonine modification. Lys282 is covalently cross-linked (Glycyl lysine isopeptide (Lys-Gly) (interchain with G-Cter in SUMO2)). 3 stretches are compositionally biased toward basic and acidic residues: residues Glu314–Asp343, Ser351–Glu488, and Arg502–Val521. Positions Lys379–Arg428 form a coiled coil. A Phosphoserine modification is found at Ser458.

Belongs to the NSRP1 family. As to quaternary structure, interacts (via C-terminus) with SRSF1. Interacts (via C-terminus) with SRSF2.

Its subcellular location is the nucleus. The protein resides in the nucleus speckle. Functionally, RNA-binding protein that mediates pre-mRNA alternative splicing regulation. The protein is Nuclear speckle splicing regulatory protein 1 (NSRP1) of Bos taurus (Bovine).